Here is a 194-residue protein sequence, read N- to C-terminus: ATP synthase subunit delta (194 aa).

The protein belongs to the ATPase delta chain family. In terms of assembly, F-type ATPases have 2 components, F(1) - the catalytic core - and F(0) - the membrane proton channel. F(1) has five subunits: alpha(3), beta(3), gamma(1), delta(1), epsilon(1). F(0) has three main subunits: a(1), b(2) and c(10-14). The alpha and beta chains form an alternating ring which encloses part of the gamma chain. F(1) is attached to F(0) by a central stalk formed by the gamma and epsilon chains, while a peripheral stalk is formed by the delta and b chains.

The protein resides in the cell inner membrane. Functionally, f(1)F(0) ATP synthase produces ATP from ADP in the presence of a proton or sodium gradient. F-type ATPases consist of two structural domains, F(1) containing the extramembraneous catalytic core and F(0) containing the membrane proton channel, linked together by a central stalk and a peripheral stalk. During catalysis, ATP synthesis in the catalytic domain of F(1) is coupled via a rotary mechanism of the central stalk subunits to proton translocation. Its function is as follows. This protein is part of the stalk that links CF(0) to CF(1). It either transmits conformational changes from CF(0) to CF(1) or is implicated in proton conduction. The sequence is that of ATP synthase subunit delta from Bartonella bacilliformis (strain ATCC 35685 / KC583 / Herrer 020/F12,63).